A 3124-amino-acid polypeptide reads, in one-letter code: Collagen alpha-1(XII) chain (3124 aa).

A signal peptide spans 1–23; sequence MRTALCSAVAALCAAALLSSIEA. One can recognise a Fibronectin type-III 1 domain in the interval 27-117; sequence PPSDLNFTII…GQLTIQTGGP (91 aa). N-linked (GlcNAc...) asparagine glycosylation occurs at asparagine 32. Residues 139 to 311 enclose the VWFA 1 domain; it reads DLVFLVDGSW…DGIVDIQNEI (173 aa). Serine 328 carries O-linked (Xyl...) (chondroitin sulfate) serine glycosylation. A Fibronectin type-III 2 domain is found at 335-424; the sequence is PASNLVATQI…ITIMEKTQQV (90 aa). Residues 439-615 form the VWFA 2 domain; that stretch reads DVVFLVDGSY…RISFELTQSV (177 aa). 6 Fibronectin type-III domains span residues 633–722, 724–815, 816–906, 908–998, 999–1087, and 1089–1179; these read PAKN…LEVK, APRN…VRGN, PRNL…LEER, SPRN…VSQS, ARTV…ASPF, and PPRN…TLSD. 3 O-linked (Xyl...) (chondroitin sulfate) serine glycosylation sites follow: serine 797, serine 890, and serine 981. 3 N-linked (GlcNAc...) asparagine glycosylation sites follow: asparagine 1006, asparagine 1032, and asparagine 1044. The disordered stretch occupies residues 1075–1100; it reads KSRKAEGTTASPFKPPRNLRTSDSTM. The region spanning 1199–1371 is the VWFA 3 domain; it reads DIVLLVDGSW…SFLASIGEDV (173 aa). 10 Fibronectin type-III domains span residues 1387-1476, 1477-1568, 1569-1659, 1660-1756, 1759-1853, 1854-1939, 1940-2030, 2031-2121, 2122-2210, and 2211-2299; these read PPSN…YPLS, SVRN…LPLP, GPRG…VPSP, VNLR…TPAP, GPRN…TVKN, MLVY…LERG, TPRN…LPRS, GPRN…VGLL, PPQN…LYLN, and VTDL…LKPT. Asparagine 1512 is a glycosylation site (N-linked (GlcNAc...) asparagine). Asparagine 1767 is a glycosylation site (N-linked (GlcNAc...) asparagine). N-linked (GlcNAc...) asparagine glycans are attached at residues asparagine 2210 and asparagine 2273. Positions 2327-2500 constitute a VWFA 4 domain; that stretch reads DIVFLTDASW…DAFEKIQDNL (174 aa). The segment at 2455–2750 is nonhelical region (NC3); sequence SGFSVFVVGV…NACTCTQDSV (296 aa). The 193-residue stretch at 2524 to 2716 folds into the Laminin G-like domain; it reads GFKMLESYNL…IQNFDIVCSP (193 aa). Residues asparagine 2532 and asparagine 2683 are each glycosylated (N-linked (GlcNAc...) asparagine). Disordered regions lie at residues 2749–2900 and 2935–3080; these read SVGP…GDRG and PNDY…EGEP. 3 Collagen-like domains span residues 2751–2802, 2807–2858, and 2859–2900; these read GPPG…GPNG, GEPG…GPRG, and PPGP…GDRG. The interval 2751–2902 is triple-helical region (COL2) with 1 imperfection; it reads GPPGPPGPPG…KGEKGDRGDI (152 aa). Composition is skewed to pro residues over residues 2752 to 2761 and 2788 to 2798; these read PPGPPGPPGG and PPGPQGPPGPQ. Residues 2821–2830 show a composition bias toward low complexity; that stretch reads PGLPGRSGTP. Residues 2832 to 2841 are compositionally biased toward pro residues; the sequence is LPGPPGPVGP. Low complexity-rich tracts occupy residues 2842-2854 and 2865-2878; these read PGER…DGPT and APGV…SGKP. The short motif at 2899-2901 is the Cell attachment site element; the sequence is RGD. The segment at 2903–2945 is nonhelical region (NC2); it reads ASQNMMRAVARQVCEQLINGQMSRFNQMLNQIPNDYYSNRNQP. Residues 2935–2944 show a composition bias toward polar residues; it reads PNDYYSNRNQ. Over residues 2945 to 2954 the composition is skewed to pro residues; sequence PGPPGPPGPP. A Collagen-like 4 domain is found at 2945 to 2994; sequence PGPPGPPGPPGAAGTRGEPGPGGRPGFPGPPGVQGPPGERGMPGEKGERG. The interval 2946-3048 is triple-helical region (COL1) with 2 imperfections; the sequence is GPPGPPGPPG…RGPPGPPGYC (103 aa). Residues 2961–2970 are compositionally biased toward gly residues; that stretch reads GEPGPGGRPG. Residues 3010 to 3024 show a composition bias toward low complexity; the sequence is QGESRTGPPGSTGSR. A nonhelical region (NC1) region spans residues 3049-3124; the sequence is DSSQCASIPY…SLSRKAKRKP (76 aa).

The protein belongs to the fibril-associated collagens with interrupted helices (FACIT) family. As to quaternary structure, trimer of identical chains each containing 190 kDa of non-triple-helical sequences. In terms of processing, the triple-helical tail is stabilized by disulfide bonds at each end. Post-translationally, prolines at the third position of the tripeptide repeating unit (G-X-Y) are hydroxylated in some or all of the chains. O-glycosylated; glycosaminoglycan of chondroitin-sulfate type. Type XII collagen is present in tendons, ligaments, perichondrium, and periosteum, all dense connective tissues containing type I collagen.

It localises to the secreted. The protein resides in the extracellular space. It is found in the extracellular matrix. Functionally, type XII collagen interacts with type I collagen-containing fibrils, the COL1 domain could be associated with the surface of the fibrils, and the COL2 and NC3 domains may be localized in the perifibrillar matrix. The protein is Collagen alpha-1(XII) chain (COL12A1) of Gallus gallus (Chicken).